Here is a 263-residue protein sequence, read N- to C-terminus: Orotidine 5'-phosphate decarboxylase (263 aa).

Substrate-binding positions include aspartate 36, 58 to 60, 90 to 99, tyrosine 216, and arginine 234; these read KTH and DRKFADIGNT. Lysine 92 (proton donor) is an active-site residue.

Belongs to the OMP decarboxylase family.

It carries out the reaction orotidine 5'-phosphate + H(+) = UMP + CO2. The protein operates within pyrimidine metabolism; UMP biosynthesis via de novo pathway; UMP from orotate: step 2/2. The protein is Orotidine 5'-phosphate decarboxylase (URA3) of Komagataella pastoris (Yeast).